An 81-amino-acid chain; its full sequence is Conotoxin ArMKLT2-0311 (81 aa).

Residues 1–22 form the signal peptide; the sequence is MKLTCVLIVALLFLTACQLTTA. Residues 23 to 34 show a composition bias toward basic and acidic residues; sequence DDSRDKQEDPLV. A disordered region spans residues 23 to 45; the sequence is DDSRDKQEDPLVRSHRKMQKSED. Residues 23–51 constitute a propeptide that is removed on maturation; that stretch reads DDSRDKQEDPLVRSHRKMQKSEDPKMAER. Disulfide bonds link cysteine 52–cysteine 67, cysteine 59–cysteine 71, and cysteine 66–cysteine 80.

This sequence belongs to the conotoxin O1 superfamily. In terms of tissue distribution, expressed by the venom duct.

The protein localises to the secreted. This Conus arenatus (Sand-dusted cone) protein is Conotoxin ArMKLT2-0311.